We begin with the raw amino-acid sequence, 105 residues long: MTTVSSDRIRIKLKAYDYRILDKAVAEIVDTARNTGAGVAGPIPLPTNIHKYTVNRSVHVDKKSREQFEMRIHKRLMDILEPTQQTVDALGKLSLPAGVDVEIKL.

It belongs to the universal ribosomal protein uS10 family. As to quaternary structure, part of the 30S ribosomal subunit.

Its function is as follows. Involved in the binding of tRNA to the ribosomes. In Nitratidesulfovibrio vulgaris (strain DSM 19637 / Miyazaki F) (Desulfovibrio vulgaris), this protein is Small ribosomal subunit protein uS10.